We begin with the raw amino-acid sequence, 368 residues long: UDP-N-acetylglucosamine--N-acetylmuramyl-(pentapeptide) pyrophosphoryl-undecaprenol N-acetylglucosamine transferase (368 aa).

UDP-N-acetyl-alpha-D-glucosamine-binding positions include Thr13–Gly15, Asn124, Arg167, Ser195, and Gln296.

Belongs to the glycosyltransferase 28 family. MurG subfamily.

Its subcellular location is the cell inner membrane. The catalysed reaction is di-trans,octa-cis-undecaprenyl diphospho-N-acetyl-alpha-D-muramoyl-L-alanyl-D-glutamyl-meso-2,6-diaminopimeloyl-D-alanyl-D-alanine + UDP-N-acetyl-alpha-D-glucosamine = di-trans,octa-cis-undecaprenyl diphospho-[N-acetyl-alpha-D-glucosaminyl-(1-&gt;4)]-N-acetyl-alpha-D-muramoyl-L-alanyl-D-glutamyl-meso-2,6-diaminopimeloyl-D-alanyl-D-alanine + UDP + H(+). Its pathway is cell wall biogenesis; peptidoglycan biosynthesis. In terms of biological role, cell wall formation. Catalyzes the transfer of a GlcNAc subunit on undecaprenyl-pyrophosphoryl-MurNAc-pentapeptide (lipid intermediate I) to form undecaprenyl-pyrophosphoryl-MurNAc-(pentapeptide)GlcNAc (lipid intermediate II). This chain is UDP-N-acetylglucosamine--N-acetylmuramyl-(pentapeptide) pyrophosphoryl-undecaprenol N-acetylglucosamine transferase, found in Maricaulis maris (strain MCS10) (Caulobacter maris).